Here is a 287-residue protein sequence, read N- to C-terminus: ATP synthase gamma chain (287 aa).

The protein belongs to the ATPase gamma chain family. F-type ATPases have 2 components, CF(1) - the catalytic core - and CF(0) - the membrane proton channel. CF(1) has five subunits: alpha(3), beta(3), gamma(1), delta(1), epsilon(1). CF(0) has three main subunits: a, b and c.

The protein resides in the cell inner membrane. Functionally, produces ATP from ADP in the presence of a proton gradient across the membrane. The gamma chain is believed to be important in regulating ATPase activity and the flow of protons through the CF(0) complex. This is ATP synthase gamma chain from Hahella chejuensis (strain KCTC 2396).